A 376-amino-acid polypeptide reads, in one-letter code: Succinyl-diaminopimelate desuccinylase (376 aa).

His67 contacts Zn(2+). The active site involves Asp69. Position 100 (Asp100) interacts with Zn(2+). Glu134 serves as the catalytic Proton acceptor. 3 residues coordinate Zn(2+): Glu135, Glu163, and His349.

Belongs to the peptidase M20A family. DapE subfamily. Homodimer. Zn(2+) is required as a cofactor. Requires Co(2+) as cofactor.

It catalyses the reaction N-succinyl-(2S,6S)-2,6-diaminopimelate + H2O = (2S,6S)-2,6-diaminopimelate + succinate. Its pathway is amino-acid biosynthesis; L-lysine biosynthesis via DAP pathway; LL-2,6-diaminopimelate from (S)-tetrahydrodipicolinate (succinylase route): step 3/3. Functionally, catalyzes the hydrolysis of N-succinyl-L,L-diaminopimelic acid (SDAP), forming succinate and LL-2,6-diaminopimelate (DAP), an intermediate involved in the bacterial biosynthesis of lysine and meso-diaminopimelic acid, an essential component of bacterial cell walls. The polypeptide is Succinyl-diaminopimelate desuccinylase (Shewanella woodyi (strain ATCC 51908 / MS32)).